The sequence spans 82 residues: U24 protein (82 aa).

A PPXY motif motif is present at residues 7 to 10 (PPSY). A helical transmembrane segment spans residues 52–72 (FIILACLIISVILCLILILHI).

As to quaternary structure, interacts with host ITCH; this interaction probably mediates ITCH degradation. Interacts probably with NEDD4.

It is found in the membrane. Its function is as follows. Down-regulates of the TCR/CD3E complex and the transferrin receptor TFRC in host T-cells by blocking them from recycling back to the cell surface. The protein is U24 protein of Homo sapiens (Human).